The following is a 250-amino-acid chain: MSDASSTILFEYPLNEKTRTWLRIESLLQQLHQNHSLTDMGSALTFFRAIAELLDVLERGDVRTELLKELERQQQKLLQWSDVPGVDMERIHTLRRQLKDLASTLMAAPRMGQFLREDRLIGMVRQRLGIPGGCCSFDLPTLHSWLHQPQELREKLVSGWLSSLSPLKQALDMILELIRHSGIFRPQISLNGFFQDNASDADLLRLRLEQAHQLYPQISGHKTRYAIRFLPLDSENGHIPPRLTFELACC.

It belongs to the ZapD family. As to quaternary structure, interacts with FtsZ.

Its subcellular location is the cytoplasm. Its function is as follows. Cell division factor that enhances FtsZ-ring assembly. Directly interacts with FtsZ and promotes bundling of FtsZ protofilaments, with a reduction in FtsZ GTPase activity. The protein is Cell division protein ZapD of Pectobacterium carotovorum subsp. carotovorum (strain PC1).